Reading from the N-terminus, the 87-residue chain is MRTFTLIAILTCAVLVIFHVSAAEELEAQDVIQPEDIFTGVATLEEDRIFECSFSCDIKKNGKPCKGAGEKKCSGGWRCKMNFCVKF.

The N-terminal stretch at 1-23 (MRTFTLIAILTCAVLVIFHVSAA) is a signal peptide. Residues 24 to 48 (EELEAQDVIQPEDIFTGVATLEEDR) constitute a propeptide that is removed on maturation. Cystine bridges form between Cys-52–Cys-65, Cys-56–Cys-79, and Cys-73–Cys-84.

This sequence belongs to the neurotoxin 12 (Hwtx-2) family. 03 (juruin) subfamily. In terms of tissue distribution, expressed by the venom gland.

The protein localises to the secreted. Functionally, probable ion channel inhibitor. The chain is U3-theraphotoxin-Cg1b from Chilobrachys guangxiensis (Chinese earth tiger tarantula).